The primary structure comprises 493 residues: MFKLAFTLTLCLAGSLSLAQHNPHWWGNRNTIVHLFEWKWLDIAQECENFLGPQGFAGVQVSPVNENIISAGRPWWERYQPISYKLTTRSGNEEEFGDMVRRCNDVGVRIYVDVLLNHMSGDFDGVAVGTAGTEAEPRKKSFPGVPYTAQDFHPTCEITDWNDRFQVQQCELVGLKDLNQSSDWVRSKLIEFLDHLIELGVAGFRVDAAKHMASEDLEFIYSSLSNLNIAHGFPHNSRPFIFQEVIDHGHETVSRDEYKDLGAVTEFRFSEEIGNAFRGNNALKWLQSWGTGWGFLPSGQALTFVDNHDNQRDAGAVLSYKSPKPYKMATAFHLAYPYGISRVMSSFAFDDHDTPPPQDAQERIISPEFDEDGACVNGWICEHRWRQIYAMVGFKNAVRDTEITGWWDNGDSQISFCRGNKGFLALNNNLYDLSQDLNTCLPAGTYCDVISGSLIDGSCTGKSVTVNEQGYGYIHIGSDDFDGVLALHVDAKV.

Residues 1–19 form the signal peptide; that stretch reads MFKLAFTLTLCLAGSLSLA. At Gln20 the chain carries Pyrrolidone carboxylic acid. Cys47 and Cys103 are disulfide-bonded. Positions 117, 168, and 177 each coordinate Ca(2+). Cys156 and Cys170 form a disulfide bridge. Residue Arg205 participates in chloride binding. Asp207 serves as the catalytic Nucleophile. Position 211 (His211) interacts with Ca(2+). The active-site Proton donor is Glu244. Residues Asn307 and Arg342 each contribute to the chloride site. 3 disulfides stabilise this stretch: Cys375–Cys381, Cys417–Cys440, and Cys447–Cys459.

It belongs to the glycosyl hydrolase 13 family. Monomer. Requires Ca(2+) as cofactor. Chloride is required as a cofactor.

The protein localises to the secreted. The enzyme catalyses Endohydrolysis of (1-&gt;4)-alpha-D-glucosidic linkages in polysaccharides containing three or more (1-&gt;4)-alpha-linked D-glucose units.. This Drosophila orena (Fruit fly) protein is Alpha-amylase-related protein (Amyrel).